Here is a 183-residue protein sequence, read N- to C-terminus: Ribonuclease M5 (183 aa).

One can recognise a Toprim domain in the interval 6-90; sequence KEVIVVEGKD…AYISRVSGTK (85 aa). Mg(2+)-binding residues include Glu12, Asp59, and Asp61.

It belongs to the ribonuclease M5 family. The cofactor is Mg(2+).

It localises to the cytoplasm. The enzyme catalyses Endonucleolytic cleavage of RNA, removing 21 and 42 nucleotides, respectively, from the 5'- and 3'-termini of a 5S-rRNA precursor.. Its function is as follows. Required for correct processing of both the 5' and 3' ends of 5S rRNA precursor. Cleaves both sides of a double-stranded region yielding mature 5S rRNA in one step. This is Ribonuclease M5 from Fusobacterium nucleatum subsp. nucleatum (strain ATCC 25586 / DSM 15643 / BCRC 10681 / CIP 101130 / JCM 8532 / KCTC 2640 / LMG 13131 / VPI 4355).